The chain runs to 104 residues: uncharacterized protein (104 aa).

Transmembrane regions (helical) follow at residues 47–67 and 72–92; these read IDHR…LAML and VGHV…FVLA.

It to M.leprae ML1584.

It localises to the cell membrane. This is an uncharacterized protein from Mycobacterium tuberculosis (strain CDC 1551 / Oshkosh).